The chain runs to 1059 residues: Carbamoyl phosphate synthase large chain (1059 aa).

The interval 1-401 is carboxyphosphate synthetic domain; it reads MPKRTDIKKI…SLLKACRSLE (401 aa). Positions 129, 169, 175, 176, 208, 210, 215, 241, 242, 243, 284, and 298 each coordinate ATP. Positions 133–327 constitute an ATP-grasp 1 domain; that stretch reads KQLMEDLEQP…IAKLAAKIAV (195 aa). Mg(2+) contacts are provided by Gln284, Glu298, and Asn300. Mn(2+) contacts are provided by Gln284, Glu298, and Asn300. The segment at 402 to 546 is oligomerization domain; the sequence is IGVYHNEMPE…YSTYEWENES (145 aa). A carbamoyl phosphate synthetic domain region spans residues 547–929; the sequence is IKSEKESVIV…ALYKAFEASY (383 aa). The ATP-grasp 2 domain occupies 671 to 861; it reads EQALKDLNIP…MAQIATKLIL (191 aa). ATP is bound by residues Arg707, Ser746, Leu748, Glu752, Gly777, Val778, His779, Ser780, Gln820, and Glu832. Mg(2+)-binding residues include Gln820, Glu832, and Asn834. Positions 820, 832, and 834 each coordinate Mn(2+). In terms of domain architecture, MGS-like spans 930-1059; the sequence is FHLPAFGNVI…ESRGFITQAI (130 aa). The allosteric domain stretch occupies residues 930–1059; sequence FHLPAFGNVI…ESRGFITQAI (130 aa).

This sequence belongs to the CarB family. In terms of assembly, composed of two chains; the small (or glutamine) chain promotes the hydrolysis of glutamine to ammonia, which is used by the large (or ammonia) chain to synthesize carbamoyl phosphate. Tetramer of heterodimers (alpha,beta)4. It depends on Mg(2+) as a cofactor. Requires Mn(2+) as cofactor.

It carries out the reaction hydrogencarbonate + L-glutamine + 2 ATP + H2O = carbamoyl phosphate + L-glutamate + 2 ADP + phosphate + 2 H(+). The catalysed reaction is hydrogencarbonate + NH4(+) + 2 ATP = carbamoyl phosphate + 2 ADP + phosphate + 2 H(+). The protein operates within amino-acid biosynthesis; L-arginine biosynthesis; carbamoyl phosphate from bicarbonate: step 1/1. It participates in pyrimidine metabolism; UMP biosynthesis via de novo pathway; (S)-dihydroorotate from bicarbonate: step 1/3. Functionally, large subunit of the glutamine-dependent carbamoyl phosphate synthetase (CPSase). CPSase catalyzes the formation of carbamoyl phosphate from the ammonia moiety of glutamine, carbonate, and phosphate donated by ATP, constituting the first step of 2 biosynthetic pathways, one leading to arginine and/or urea and the other to pyrimidine nucleotides. The large subunit (synthetase) binds the substrates ammonia (free or transferred from glutamine from the small subunit), hydrogencarbonate and ATP and carries out an ATP-coupled ligase reaction, activating hydrogencarbonate by forming carboxy phosphate which reacts with ammonia to form carbamoyl phosphate. This Streptococcus mutans serotype c (strain ATCC 700610 / UA159) protein is Carbamoyl phosphate synthase large chain.